The chain runs to 459 residues: Glutamate--tRNA ligase 1 (459 aa).

The 'HIGH' region motif lies at 8 to 18; sequence PSPTGYIHIGN. The 'KMSKS' region signature appears at 249 to 253; that stretch reads GLSKR. Residue Lys-252 participates in ATP binding.

Belongs to the class-I aminoacyl-tRNA synthetase family. Glutamate--tRNA ligase type 1 subfamily. In terms of assembly, monomer.

Its subcellular location is the cytoplasm. It carries out the reaction tRNA(Glu) + L-glutamate + ATP = L-glutamyl-tRNA(Glu) + AMP + diphosphate. Functionally, catalyzes the attachment of glutamate to tRNA(Glu) in a two-step reaction: glutamate is first activated by ATP to form Glu-AMP and then transferred to the acceptor end of tRNA(Glu). In Bartonella quintana (strain Toulouse) (Rochalimaea quintana), this protein is Glutamate--tRNA ligase 1.